The chain runs to 356 residues: Histidinol-phosphate aminotransferase (356 aa).

An N6-(pyridoxal phosphate)lysine modification is found at K214.

The protein belongs to the class-II pyridoxal-phosphate-dependent aminotransferase family. Histidinol-phosphate aminotransferase subfamily. Homodimer. Requires pyridoxal 5'-phosphate as cofactor.

It carries out the reaction L-histidinol phosphate + 2-oxoglutarate = 3-(imidazol-4-yl)-2-oxopropyl phosphate + L-glutamate. It functions in the pathway amino-acid biosynthesis; L-histidine biosynthesis; L-histidine from 5-phospho-alpha-D-ribose 1-diphosphate: step 7/9. The sequence is that of Histidinol-phosphate aminotransferase from Shigella dysenteriae serotype 1 (strain Sd197).